A 186-amino-acid polypeptide reads, in one-letter code: Ribosome maturation factor RimP (186 aa).

This sequence belongs to the RimP family.

It localises to the cytoplasm. Its function is as follows. Required for maturation of 30S ribosomal subunits. The protein is Ribosome maturation factor RimP of Rhizorhabdus wittichii (strain DSM 6014 / CCUG 31198 / JCM 15750 / NBRC 105917 / EY 4224 / RW1) (Sphingomonas wittichii).